The following is a 255-amino-acid chain: Triosephosphate isomerase (255 aa).

Position 9–11 (9–11 (NWK)) interacts with substrate. H96 functions as the Electrophile in the catalytic mechanism. The active-site Proton acceptor is E170. Residues G176, S216, and 237 to 238 (GG) each bind substrate.

This sequence belongs to the triosephosphate isomerase family. Homodimer.

The protein resides in the cytoplasm. The enzyme catalyses D-glyceraldehyde 3-phosphate = dihydroxyacetone phosphate. The protein operates within carbohydrate biosynthesis; gluconeogenesis. It participates in carbohydrate degradation; glycolysis; D-glyceraldehyde 3-phosphate from glycerone phosphate: step 1/1. In terms of biological role, involved in the gluconeogenesis. Catalyzes stereospecifically the conversion of dihydroxyacetone phosphate (DHAP) to D-glyceraldehyde-3-phosphate (G3P). This Magnetococcus marinus (strain ATCC BAA-1437 / JCM 17883 / MC-1) protein is Triosephosphate isomerase.